Reading from the N-terminus, the 186-residue chain is Signal peptidase I (186 aa).

Residues 1-19 are Cytoplasmic-facing; it reads MTEEKSTNKKNSLFEWVKA. The chain crosses the membrane as a helical span at residues 20–40; that stretch reads IIIAVVLALLIRAFLFEPYLV. At 41 to 186 the chain is on the extracellular side; it reads EGTSMDPTLH…FPFNEIRKTD (146 aa). Catalysis depends on residues Ser-44 and Lys-86.

Belongs to the peptidase S26 family.

The protein localises to the cell membrane. It catalyses the reaction Cleavage of hydrophobic, N-terminal signal or leader sequences from secreted and periplasmic proteins.. In Bacillus licheniformis, this protein is Signal peptidase I (lepB).